Consider the following 428-residue polypeptide: MEFIDLAPSAHARGAVQLPGSKSISNRTLLLAALAQGETQIRDLLKSDDTDRMLEALTSLGVTLTRTGENDYHLVGTGGSFPHKEADLFLGNAGTAFRPLTAALAFSGGTYKLHGVPRMHERPIGDLVDALRQVGADITYLGQEGFPPLLIKPAHIAAQGSIKIRGDVSSQFLTALLMALPMTGKETHIELVSELISKPYIEITLRLMAQFGVEVQRDGWERFTVPAASGYVSPGTVYVEGDASSASYFLAAGALGGGPVRVQGVGAKSIQGDVAFADALEAIGVTITKGDNWIEASAPQLPLKAFNRDFNHIPDAAMTLAVVALFCDGPSRLTNIASWRVKETDRIAAMATELRKLGAIVEEGEDWLQVTPVPTLNAQVPIDTYDDHRMAMCFSLATFGGVPVRINDPQCTAKTFPTYFDVFSQVVS.

Lys-22, Ser-23, and Arg-27 together coordinate 3-phosphoshikimate. Lys-22 is a phosphoenolpyruvate binding site. Phosphoenolpyruvate is bound by residues Gly-94 and Arg-122. Positions 169, 170, 171, 197, 315, and 342 each coordinate 3-phosphoshikimate. Position 171 (Gln-171) interacts with phosphoenolpyruvate. The active-site Proton acceptor is the Asp-315. The phosphoenolpyruvate site is built by Arg-346, Arg-389, and Lys-414.

The protein belongs to the EPSP synthase family. As to quaternary structure, monomer.

The protein localises to the cytoplasm. It carries out the reaction 3-phosphoshikimate + phosphoenolpyruvate = 5-O-(1-carboxyvinyl)-3-phosphoshikimate + phosphate. It participates in metabolic intermediate biosynthesis; chorismate biosynthesis; chorismate from D-erythrose 4-phosphate and phosphoenolpyruvate: step 6/7. Catalyzes the transfer of the enolpyruvyl moiety of phosphoenolpyruvate (PEP) to the 5-hydroxyl of shikimate-3-phosphate (S3P) to produce enolpyruvyl shikimate-3-phosphate and inorganic phosphate. The protein is 3-phosphoshikimate 1-carboxyvinyltransferase of Cellvibrio japonicus (strain Ueda107) (Pseudomonas fluorescens subsp. cellulosa).